The sequence spans 142 residues: Large ribosomal subunit protein uL11 (142 aa).

The protein belongs to the universal ribosomal protein uL11 family. As to quaternary structure, part of the ribosomal stalk of the 50S ribosomal subunit. Interacts with L10 and the large rRNA to form the base of the stalk. L10 forms an elongated spine to which L12 dimers bind in a sequential fashion forming a multimeric L10(L12)X complex. In terms of processing, one or more lysine residues are methylated.

Functionally, forms part of the ribosomal stalk which helps the ribosome interact with GTP-bound translation factors. This chain is Large ribosomal subunit protein uL11, found in Pectobacterium atrosepticum (strain SCRI 1043 / ATCC BAA-672) (Erwinia carotovora subsp. atroseptica).